We begin with the raw amino-acid sequence, 330 residues long: B-cell receptor CD22 (330 aa).

The first 17 residues, 1-17 (MHLLGPWLLLLEYLAFS), serve as a signal peptide directing secretion. In terms of domain architecture, Ig-like V-type spans 18–136 (DSSKWAFEHP…MERIHLNVSE (119 aa)). Residues 18 to 330 (DSSKWAFEHP…VFLQVQYAPE (313 aa)) are Extracellular-facing. 3 disulfide bridges follow: cysteine 37–cysteine 165, cysteine 42–cysteine 100, and cysteine 159–cysteine 217. N-linked (GlcNAc...) asparagine glycans are attached at residues asparagine 65, asparagine 99, and asparagine 110. Position 118 (arginine 118) interacts with N-acetylneuraminate. 4 N-linked (GlcNAc...) asparagine glycosylation sites follow: asparagine 133, asparagine 162, asparagine 187, and asparagine 229. Ig-like C2-type domains are found at residues 141–233 (PHIQ…DTVQ) and 240–324 (PKLK…VFLQ). An intrachain disulfide couples cysteine 263 to cysteine 307.

The protein belongs to the immunoglobulin superfamily. SIGLEC (sialic acid binding Ig-like lectin) family. Predominantly monomer of isoform CD22-beta. Also found as heterodimer of isoform CD22-beta and a shorter isoform. Interacts with PTPN6/SHP-1, LYN, SYK, PIK3R1/PIK3R2 and PLCG1 upon phosphorylation. Interacts with GRB2, INPP5D and SHC1 upon phosphorylation. May form a complex with INPP5D/SHIP, GRB2 and SHC1.

It is found in the cell membrane. In terms of biological role, most highly expressed siglec (sialic acid-binding immunoglobulin-like lectin) on B-cells that plays a role in various aspects of B-cell biology including differentiation, antigen presentation, and trafficking to bone marrow. Binds to alpha 2,6-linked sialic acid residues of surface molecules such as CD22 itself, CD45 and IgM in a cis configuration. Can also bind to ligands on other cells as an adhesion molecule in a trans configuration. Acts as an inhibitory coreceptor on the surface of B-cells and inhibits B-cell receptor induced signaling, characterized by inhibition of the calcium mobilization and cellular activation. Mechanistically, the immunoreceptor tyrosine-based inhibitory motif domain is phosphorylated by the Src kinase LYN, which in turn leads to the recruitment of the protein tyrosine phosphatase 1/PTPN6, leading to the negative regulation of BCR signaling. If this negative signaling from is of sufficient strength, apoptosis of the B-cell can be induced. The protein is B-cell receptor CD22 of Pongo pygmaeus (Bornean orangutan).